Consider the following 245-residue polypeptide: Probable phosphatase CKO_02035 (245 aa).

Residues His-7, His-9, His-15, His-40, Glu-73, His-101, His-131, Asp-192, and His-194 each coordinate Zn(2+).

This sequence belongs to the PHP family. In terms of assembly, homotrimer. Zn(2+) serves as cofactor.

The protein is Probable phosphatase CKO_02035 of Citrobacter koseri (strain ATCC BAA-895 / CDC 4225-83 / SGSC4696).